The sequence spans 306 residues: Glycine--tRNA ligase alpha subunit (306 aa).

The protein belongs to the class-II aminoacyl-tRNA synthetase family. In terms of assembly, tetramer of two alpha and two beta subunits.

The protein localises to the cytoplasm. The catalysed reaction is tRNA(Gly) + glycine + ATP = glycyl-tRNA(Gly) + AMP + diphosphate. This Aliivibrio fischeri (strain ATCC 700601 / ES114) (Vibrio fischeri) protein is Glycine--tRNA ligase alpha subunit.